Here is a 283-residue protein sequence, read N- to C-terminus: Elongation factor Ts (283 aa).

The segment at 80-83 (TDFV) is involved in Mg(2+) ion dislocation from EF-Tu.

This sequence belongs to the EF-Ts family.

The protein localises to the cytoplasm. In terms of biological role, associates with the EF-Tu.GDP complex and induces the exchange of GDP to GTP. It remains bound to the aminoacyl-tRNA.EF-Tu.GTP complex up to the GTP hydrolysis stage on the ribosome. The sequence is that of Elongation factor Ts from Pectobacterium atrosepticum (strain SCRI 1043 / ATCC BAA-672) (Erwinia carotovora subsp. atroseptica).